The sequence spans 171 residues: Shikimate kinase (171 aa).

Position 11 to 16 (11 to 16) interacts with ATP; that stretch reads GTGKTT. T15 serves as a coordination point for Mg(2+). D33, R57, and G79 together coordinate substrate. R117 contacts ATP. R136 is a binding site for substrate.

It belongs to the shikimate kinase family. Monomer. The cofactor is Mg(2+).

It is found in the cytoplasm. It carries out the reaction shikimate + ATP = 3-phosphoshikimate + ADP + H(+). Its pathway is metabolic intermediate biosynthesis; chorismate biosynthesis; chorismate from D-erythrose 4-phosphate and phosphoenolpyruvate: step 5/7. Its function is as follows. Catalyzes the specific phosphorylation of the 3-hydroxyl group of shikimic acid using ATP as a cosubstrate. This is Shikimate kinase from Caldanaerobacter subterraneus subsp. tengcongensis (strain DSM 15242 / JCM 11007 / NBRC 100824 / MB4) (Thermoanaerobacter tengcongensis).